The following is a 344-amino-acid chain: Methylthioribose-1-phosphate isomerase (344 aa).

Residues 46–48, arginine 89, and glutamine 196 contribute to the substrate site; that span reads RGA. The active-site Proton donor is aspartate 237. 247 to 248 contacts substrate; it reads NK.

The protein belongs to the eIF-2B alpha/beta/delta subunits family. MtnA subfamily.

The enzyme catalyses 5-(methylsulfanyl)-alpha-D-ribose 1-phosphate = 5-(methylsulfanyl)-D-ribulose 1-phosphate. The protein operates within amino-acid biosynthesis; L-methionine biosynthesis via salvage pathway; L-methionine from S-methyl-5-thio-alpha-D-ribose 1-phosphate: step 1/6. In terms of biological role, catalyzes the interconversion of methylthioribose-1-phosphate (MTR-1-P) into methylthioribulose-1-phosphate (MTRu-1-P). The polypeptide is Methylthioribose-1-phosphate isomerase (Syntrophotalea carbinolica (strain DSM 2380 / NBRC 103641 / GraBd1) (Pelobacter carbinolicus)).